The primary structure comprises 188 residues: dITP/XTP pyrophosphatase (188 aa).

10–15 contributes to the substrate binding site; it reads TSNPHK. 2 residues coordinate Mg(2+): glutamate 39 and aspartate 69. Catalysis depends on aspartate 69, which acts as the Proton acceptor. Residues serine 70, 145-148, lysine 168, and 173-174 each bind substrate; these read FGFD and HR.

It belongs to the HAM1 NTPase family. In terms of assembly, homodimer. The cofactor is Mg(2+).

The catalysed reaction is XTP + H2O = XMP + diphosphate + H(+). It catalyses the reaction dITP + H2O = dIMP + diphosphate + H(+). It carries out the reaction ITP + H2O = IMP + diphosphate + H(+). Its function is as follows. Pyrophosphatase that catalyzes the hydrolysis of nucleoside triphosphates to their monophosphate derivatives, with a high preference for the non-canonical purine nucleotides XTP (xanthosine triphosphate), dITP (deoxyinosine triphosphate) and ITP. Seems to function as a house-cleaning enzyme that removes non-canonical purine nucleotides from the nucleotide pool, thus preventing their incorporation into DNA/RNA and avoiding chromosomal lesions. This Ignicoccus hospitalis (strain KIN4/I / DSM 18386 / JCM 14125) protein is dITP/XTP pyrophosphatase.